A 336-amino-acid polypeptide reads, in one-letter code: Eukaryotic translation initiation factor 3 subunit I (336 aa).

WD repeat units lie at residues 8 to 49, 50 to 91, 93 to 135, 144 to 183, 187 to 226, and 285 to 324; these read GHER…GTYN, GHNG…KAWE, PTAI…GPQP, PIGS…EVAS, NHIG…VIKS, and GGFG…FRAK.

Belongs to the eIF-3 subunit I family. Component of the eukaryotic translation initiation factor 3 (eIF-3) complex.

The protein localises to the cytoplasm. Component of the eukaryotic translation initiation factor 3 (eIF-3) complex, which is involved in protein synthesis of a specialized repertoire of mRNAs and, together with other initiation factors, stimulates binding of mRNA and methionyl-tRNAi to the 40S ribosome. The eIF-3 complex specifically targets and initiates translation of a subset of mRNAs involved in cell proliferation. This chain is Eukaryotic translation initiation factor 3 subunit I, found in Puccinia graminis f. sp. tritici (strain CRL 75-36-700-3 / race SCCL) (Black stem rust fungus).